The sequence spans 432 residues: Mannose-6-phosphate isomerase 1 (432 aa).

The residue at position 1 (M1) is an N-acetylmethionine. Positions 124, 126, 151, and 288 each coordinate Zn(2+). R307 is a catalytic residue.

The protein belongs to the mannose-6-phosphate isomerase type 1 family. Zn(2+) is required as a cofactor. Constitutively expressed in both vegetative and reproductive organs under normal growth conditions (at protein level).

It carries out the reaction D-mannose 6-phosphate = D-fructose 6-phosphate. It functions in the pathway nucleotide-sugar biosynthesis; GDP-alpha-D-mannose biosynthesis; alpha-D-mannose 1-phosphate from D-fructose 6-phosphate: step 1/2. With respect to regulation, inhibited by EDTA, Zn(2+), Cd(2+), Co(2+), p-chloromercuribenzoate and L-ascorbic acid (AsA). Functionally, phosphomannose isomerase involved in the synthesis of the GDP-mannose and dolichol-phosphate-mannose required for a number of critical mannosyl transfer reactions. Involved in the ascorbic acid (AsA) biosynthesis. Required during the endosperm development. The chain is Mannose-6-phosphate isomerase 1 (PMI1) from Arabidopsis thaliana (Mouse-ear cress).